Consider the following 78-residue polypeptide: Acyl carrier protein (78 aa).

Residues 2-77 enclose the Carrier domain; it reads SDIAERVKKI…DAIKYIGENM (76 aa). At Ser-37 the chain carries O-(pantetheine 4'-phosphoryl)serine.

Belongs to the acyl carrier protein (ACP) family. Post-translationally, 4'-phosphopantetheine is transferred from CoA to a specific serine of apo-ACP by AcpS. This modification is essential for activity because fatty acids are bound in thioester linkage to the sulfhydryl of the prosthetic group.

The protein resides in the cytoplasm. It functions in the pathway lipid metabolism; fatty acid biosynthesis. Its function is as follows. Carrier of the growing fatty acid chain in fatty acid biosynthesis. The sequence is that of Acyl carrier protein from Magnetococcus marinus (strain ATCC BAA-1437 / JCM 17883 / MC-1).